A 419-amino-acid chain; its full sequence is Hyaluronan synthase (419 aa).

5 helical membrane passes run 8-28 (LIVL…MYLF), 33-53 (VGIY…LSFL), 318-338 (IVAL…VAIG), 345-365 (AIQL…IVAL), and 376-396 (PASF…LQPL).

It belongs to the NodC/HAS family. Requires Mg(2+) as cofactor.

Its subcellular location is the cell membrane. The enzyme catalyses [hyaluronan](n) + UDP-N-acetyl-alpha-D-glucosamine = N-acetyl-beta-D-glucosaminyl-(1-&gt;4)-[hyaluronan](n) + UDP + H(+). The catalysed reaction is N-acetyl-beta-D-glucosaminyl-(1-&gt;4)-[hyaluronan](n) + UDP-alpha-D-glucuronate = [hyaluronan](n+1) + UDP + H(+). It functions in the pathway glycan biosynthesis; hyaluronan biosynthesis. Glycosaminoglycan synthesis. The hyaluronic acid capsule is involved in the pathogenicity of group A Streptococci; it may be the major virulence determinant. The polypeptide is Hyaluronan synthase (hasA) (Streptococcus pyogenes serotype M1).